Here is a 114-residue protein sequence, read N- to C-terminus: Protein ORF3 (114 aa).

Hydrophobic regions lie at residues Trp-6–Arg-24 and Ala-33–Leu-53. Residues Val-28–Pro-68 form an interaction with host HPX region. Residues Val-48–Pro-72 are interaction with the capsid protein. Ser-71 is subject to Phosphoserine; by host. Positions Pro-72–Arg-114 are homodimerization, and interaction with host AMBP/bikunin. The tract at residues Ser-85–Arg-114 is disordered. Residues Arg-95–Val-104 form an interaction with host SRC, HCK, FYN, PIK3R3 and GRB2 region. The short motif at Pro-96–Pro-99 is the PTAP/PSAP motif element.

This sequence belongs to the hepevirus ORF3 protein family. As to quaternary structure, forms homooligomers. Interacts with host SRC, HCK, FYN, PIK3R3 and GRB2 (via SH3 domain); binding does not activate the kinases. Interacts with host AMBP/bikunin and AMBP/alpha-1-microglobulin peptides. Interacts with host HPX/hemopexin. Interacts (when phosphorylated) with capsid protein ORF2. Interacts with host TSG101; this interaction plays a role in viral release from the host cell. Interacts with host SIRPA; this interaction down-regulates the phosphorylation of host IRF3. Post-translationally, palmitoylated in the N-terminus.

Its subcellular location is the host endoplasmic reticulum membrane. It localises to the host cytoplasm. It is found in the host cytoskeleton. The protein resides in the virion. The protein localises to the host cell membrane. Functionally, small multifunctional phosphoprotein involved in virion morphogenesis, egress and counteracting host innate immunity. Plays critical roles in the final steps of viral release by interacting with host TSG101, a member of the vacuolar protein-sorting pathway and using other cellular host proteins involved in vesicle formation pathway. Also acts as a viroporin and forms ion conductive pores allowing viral particle release. Impairs the generation of type I interferon by down-regulating host TLR3 and TLR7 as well as their downstream signaling pathways. Down-regulates the phosphorylation of host IRF3 via the interaction with host SIRP-alpha, thereby inhibiting IFN-I expression. Interacts with host microtubules. This Hepatitis E virus genotype 1 (isolate Human/India/Hyderabad) (HEV-1) protein is Protein ORF3.